Here is a 344-residue protein sequence, read N- to C-terminus: Deoxyhypusine hydroxylase (344 aa).

HEAT-like PBS-type repeat units lie at residues 81-107 (LKHE…VLED) and 115-140 (RHEA…FRDR). Residues His83, Glu84, His116, and Glu117 each coordinate Fe cation. Residues 169–188 (EKLRASDFSSVDPAPPTAQG) form a disordered region. HEAT-like PBS-type repeat units lie at residues 210-240 (KRYR…LAKG), 248-274 (FRHE…ALSN), and 281-308 (VRHE…FLHD). Residues His250, Glu251, His283, and Glu284 each coordinate Fe cation.

The protein belongs to the deoxyhypusine hydroxylase family. Fe(2+) serves as cofactor.

Its subcellular location is the cytoplasm. It is found in the nucleus. The catalysed reaction is [eIF5A protein]-deoxyhypusine + AH2 + O2 = [eIF5A protein]-hypusine + A + H2O. The protein operates within protein modification; eIF5A hypusination. Its function is as follows. Catalyzes the hydroxylation of the N(6)-(4-aminobutyl)-L-lysine intermediate to form hypusine, an essential post-translational modification only found in mature eIF-5A factor. This is Deoxyhypusine hydroxylase from Chaetomium globosum (strain ATCC 6205 / CBS 148.51 / DSM 1962 / NBRC 6347 / NRRL 1970) (Soil fungus).